The chain runs to 83 residues: Small ribosomal subunit protein uS17 (83 aa).

This sequence belongs to the universal ribosomal protein uS17 family. Part of the 30S ribosomal subunit.

Functionally, one of the primary rRNA binding proteins, it binds specifically to the 5'-end of 16S ribosomal RNA. In Campylobacter hominis (strain ATCC BAA-381 / DSM 21671 / CCUG 45161 / LMG 19568 / NCTC 13146 / CH001A), this protein is Small ribosomal subunit protein uS17.